The following is a 425-amino-acid chain: Histidine--tRNA ligase (425 aa).

This sequence belongs to the class-II aminoacyl-tRNA synthetase family. Homodimer.

Its subcellular location is the cytoplasm. The catalysed reaction is tRNA(His) + L-histidine + ATP = L-histidyl-tRNA(His) + AMP + diphosphate + H(+). In Streptomyces coelicolor (strain ATCC BAA-471 / A3(2) / M145), this protein is Histidine--tRNA ligase.